A 353-amino-acid polypeptide reads, in one-letter code: Fe(3+) ions import ATP-binding protein FbpC (353 aa).

The ABC transporter domain maps to 9–239 (VTFENVTKKF…PASAFIADFM (231 aa)). 41-48 (GLSGCGKT) is an ATP binding site.

It belongs to the ABC transporter superfamily. Fe(3+) ion importer (TC 3.A.1.10) family. As to quaternary structure, the complex is composed of two ATP-binding proteins (FbpC), two transmembrane proteins (FbpB) and a solute-binding protein (FbpA).

Its subcellular location is the cell inner membrane. The catalysed reaction is Fe(3+)(out) + ATP + H2O = Fe(3+)(in) + ADP + phosphate + H(+). Its function is as follows. Part of the ABC transporter complex FbpABC involved in Fe(3+) ions import. Responsible for energy coupling to the transport system. The sequence is that of Fe(3+) ions import ATP-binding protein FbpC from Brucella melitensis biotype 1 (strain ATCC 23456 / CCUG 17765 / NCTC 10094 / 16M).